The following is a 274-amino-acid chain: Orotidine 5'-phosphate decarboxylase (274 aa).

Substrate-binding positions include D40, 62-64 (KTH), 93-102 (DRKFVDIGNT), Y227, and R245. K95 (proton donor) is an active-site residue.

Belongs to the OMP decarboxylase family.

It carries out the reaction orotidine 5'-phosphate + H(+) = UMP + CO2. It participates in pyrimidine metabolism; UMP biosynthesis via de novo pathway; UMP from orotate: step 2/2. This chain is Orotidine 5'-phosphate decarboxylase (URA3), found in Coccidioides immitis (strain RS) (Valley fever fungus).